The sequence spans 298 residues: Small ribosomal subunit protein uS3m (298 aa).

Belongs to the universal ribosomal protein uS3 family.

The protein resides in the mitochondrion. The sequence is that of Small ribosomal subunit protein uS3m (RPS3) from Acanthamoeba castellanii (Amoeba).